A 130-amino-acid chain; its full sequence is Small ribosomal subunit protein uS11 (130 aa).

The protein belongs to the universal ribosomal protein uS11 family. In terms of assembly, part of the 30S ribosomal subunit. Interacts with proteins S7 and S18. Binds to IF-3.

In terms of biological role, located on the platform of the 30S subunit, it bridges several disparate RNA helices of the 16S rRNA. Forms part of the Shine-Dalgarno cleft in the 70S ribosome. The sequence is that of Small ribosomal subunit protein uS11 from Syntrophobacter fumaroxidans (strain DSM 10017 / MPOB).